The following is an 856-amino-acid chain: FO synthase (856 aa).

Radical SAM core domains follow at residues isoleucine 84 to asparagine 336 and valine 544 to glutamine 785. Residues serine 85–leucine 417 are cofG-like. The [4Fe-4S] cluster site is built by cysteine 98, cysteine 102, cysteine 105, cysteine 558, cysteine 562, and cysteine 565. The cofH-like stretch occupies residues aspartate 521–leucine 854.

It in the N-terminal section; belongs to the radical SAM superfamily. CofG family. This sequence in the C-terminal section; belongs to the radical SAM superfamily. CofH family. Requires [4Fe-4S] cluster as cofactor.

The enzyme catalyses 5-amino-6-(D-ribitylamino)uracil + L-tyrosine + S-adenosyl-L-methionine = 5-amino-5-(4-hydroxybenzyl)-6-(D-ribitylimino)-5,6-dihydrouracil + 2-iminoacetate + 5'-deoxyadenosine + L-methionine + H(+). It carries out the reaction 5-amino-5-(4-hydroxybenzyl)-6-(D-ribitylimino)-5,6-dihydrouracil + S-adenosyl-L-methionine = 7,8-didemethyl-8-hydroxy-5-deazariboflavin + 5'-deoxyadenosine + L-methionine + NH4(+) + H(+). It functions in the pathway cofactor biosynthesis; coenzyme F0 biosynthesis. In terms of biological role, catalyzes the radical-mediated synthesis of 7,8-didemethyl-8-hydroxy-5-deazariboflavin (FO) from 5-amino-6-(D-ribitylamino)uracil and L-tyrosine. The sequence is that of FO synthase (fbiC) from Mycobacterium bovis (strain ATCC BAA-935 / AF2122/97).